The sequence spans 400 residues: Chaperone protein DnaJ (400 aa).

The region spanning 4–69 (DYYETLGVTR…DKRRRYDQFG (66 aa)) is the J domain. The segment at 156–237 (GVEKTLKVKR…CYGEGIKLGE (82 aa)) adopts a CR-type zinc-finger fold. Cysteine 169, cysteine 172, cysteine 185, cysteine 188, cysteine 211, cysteine 214, cysteine 225, and cysteine 228 together coordinate Zn(2+). CXXCXGXG motif repeat units lie at residues 169–176 (CEVCNGTG), 185–192 (CQTCHGSG), 211–218 (CPTCGGEG), and 225–232 (CTACYGEG).

Belongs to the DnaJ family. In terms of assembly, homodimer. The cofactor is Zn(2+).

Its subcellular location is the cytoplasm. Functionally, participates actively in the response to hyperosmotic and heat shock by preventing the aggregation of stress-denatured proteins and by disaggregating proteins, also in an autonomous, DnaK-independent fashion. Unfolded proteins bind initially to DnaJ; upon interaction with the DnaJ-bound protein, DnaK hydrolyzes its bound ATP, resulting in the formation of a stable complex. GrpE releases ADP from DnaK; ATP binding to DnaK triggers the release of the substrate protein, thus completing the reaction cycle. Several rounds of ATP-dependent interactions between DnaJ, DnaK and GrpE are required for fully efficient folding. Also involved, together with DnaK and GrpE, in the DNA replication of plasmids through activation of initiation proteins. The sequence is that of Chaperone protein DnaJ from Chlorobium chlorochromatii (strain CaD3).